Consider the following 567-residue polypeptide: Urease subunit alpha (567 aa).

A Urease domain is found at 128–567; it reads GGIDAHVHFI…LPMSQRYFLF (440 aa). Residues H133, H135, and K216 each coordinate Ni(2+). K216 bears the N6-carboxylysine mark. H218 provides a ligand contact to substrate. Ni(2+) is bound by residues H245 and H271. Catalysis depends on H319, which acts as the Proton donor. D359 is a binding site for Ni(2+).

Belongs to the metallo-dependent hydrolases superfamily. Urease alpha subunit family. As to quaternary structure, heterotrimer of UreA (gamma), UreB (beta) and UreC (alpha) subunits. Three heterotrimers associate to form the active enzyme. It depends on Ni cation as a cofactor. Carboxylation allows a single lysine to coordinate two nickel ions.

The protein resides in the cytoplasm. It carries out the reaction urea + 2 H2O + H(+) = hydrogencarbonate + 2 NH4(+). Its pathway is nitrogen metabolism; urea degradation; CO(2) and NH(3) from urea (urease route): step 1/1. This chain is Urease subunit alpha, found in Blochmanniella pennsylvanica (strain BPEN).